Here is a 217-residue protein sequence, read N- to C-terminus: Imidazole glycerol phosphate synthase subunit HisH (217 aa).

The Glutamine amidotransferase type-1 domain occupies T3–P217. C82 serves as the catalytic Nucleophile. Active-site residues include H197 and E199.

As to quaternary structure, heterodimer of HisH and HisF.

Its subcellular location is the cytoplasm. The catalysed reaction is 5-[(5-phospho-1-deoxy-D-ribulos-1-ylimino)methylamino]-1-(5-phospho-beta-D-ribosyl)imidazole-4-carboxamide + L-glutamine = D-erythro-1-(imidazol-4-yl)glycerol 3-phosphate + 5-amino-1-(5-phospho-beta-D-ribosyl)imidazole-4-carboxamide + L-glutamate + H(+). It catalyses the reaction L-glutamine + H2O = L-glutamate + NH4(+). Its pathway is amino-acid biosynthesis; L-histidine biosynthesis; L-histidine from 5-phospho-alpha-D-ribose 1-diphosphate: step 5/9. IGPS catalyzes the conversion of PRFAR and glutamine to IGP, AICAR and glutamate. The HisH subunit catalyzes the hydrolysis of glutamine to glutamate and ammonia as part of the synthesis of IGP and AICAR. The resulting ammonia molecule is channeled to the active site of HisF. The polypeptide is Imidazole glycerol phosphate synthase subunit HisH (Cupriavidus pinatubonensis (strain JMP 134 / LMG 1197) (Cupriavidus necator (strain JMP 134))).